A 166-amino-acid chain; its full sequence is Large ribosomal subunit protein uL10 (166 aa).

The protein belongs to the universal ribosomal protein uL10 family. Part of the ribosomal stalk of the 50S ribosomal subunit. The N-terminus interacts with L11 and the large rRNA to form the base of the stalk. The C-terminus forms an elongated spine to which L12 dimers bind in a sequential fashion forming a multimeric L10(L12)X complex.

Forms part of the ribosomal stalk, playing a central role in the interaction of the ribosome with GTP-bound translation factors. This chain is Large ribosomal subunit protein uL10, found in Alkaliphilus metalliredigens (strain QYMF).